The sequence spans 248 residues: Serine/arginine-rich splicing factor 1 (248 aa).

An N-acetylserine modification is found at S2. S2 bears the Phosphoserine mark. The region spanning 16–91 (CRIYVGNLPP…YRLRVEFPRS (76 aa)) is the RRM 1 domain. K30 participates in a covalent cross-link: Glycyl lysine isopeptide (Lys-Gly) (interchain with G-Cter in SUMO2). Position 38 is an N6-acetyllysine; alternate (K38). A Glycyl lysine isopeptide (Lys-Gly) (interchain with G-Cter in SUMO2); alternate cross-link involves residue K38. The tract at residues 88–134 (FPRSGRGTGRGGGGGGGGGAPRGRYGPPSRRSENRVVVSGLPPSGSW) is disordered. 3 positions are modified to asymmetric dimethylarginine; alternate: R93, R97, and R109. Residues R93, R97, and R109 each carry the omega-N-methylarginine; alternate modification. Gly residues predominate over residues 93–108 (RGTGRGGGGGGGGGAP). R111 is subject to Omega-N-methylarginine. An RRM 2 domain is found at 121 to 195 (NRVVVSGLPP…ETAYIRVKVD (75 aa)). The residue at position 133 (S133) is a Phosphoserine. An N6-acetyllysine modification is found at K179. Positions 191-248 (RVKVDGPRSPSYGRSRSRSRSRSRSRSRSNSRSRSYSPRRSRGSPRYSPRHSRSRSRT) are disordered. Residues 198–247 (RSPSYGRSRSRSRSRSRSRSRSNSRSRSYSPRRSRGSPRYSPRHSRSRSR) are interaction with SAFB1. Phosphoserine is present on residues S199 and S201. Y202 is subject to Phosphotyrosine. Residues S205, S207, S209, S231, S234, and S238 each carry the phosphoserine modification. The segment covering 205–248 (SRSRSRSRSRSRSRSNSRSRSYSPRRSRGSPRYSPRHSRSRSRT) has biased composition (basic residues).

Belongs to the splicing factor SR family. Consists of two polypeptides of p32 and p33. Identified in the spliceosome C complex. Component of a ribonucleoprotein complex containing mRNAs and RNA-binding proteins including DDX5, HNRNPH2 and SRSF1 as well as splicing regulator ARVCF. In vitro, self-associates and binds SRSF2, SNRNP70 and U2AF1 but not U2AF2. Binds SREK1/SFRS12. Interacts with SAFB/SAFB1. Interacts with PSIP1/LEDGF. Interacts with RSRC1 (via Arg/Ser-rich domain). Interacts with ZRSR2/U2AF1-RS2. Interacts with CCDC55 (via C-terminus). Interacts with SRPK1 and a sliding docking interaction is essential for its sequential and processive phosphorylation by SRPK1. Interacts with NXF1. Interacts with CCNL1, CCNL2 and CDK11B. Interacts with RRP1B. Interacts (when phosphorylated in its RS domain) with TNPO3; promoting nuclear import. Interacts with ILDR1 (via C-terminus) and ILDR2. In terms of processing, phosphorylated by CLK1, CLK2, CLK3 and CLK4. Phosphorylated by SRPK1 at multiple serines in its RS domain via a directional (C-terminal to N-terminal) and a dual-track mechanism incorporating both processive phosphorylation (in which the kinase stays attached to the substrate after each round of phosphorylation) and distributive phosphorylation steps (in which the kinase and substrate dissociate after each phosphorylation event). The RS domain of SRSF1 binds to a docking groove in the large lobe of the kinase domain of SRPK1 and this induces certain structural changes in SRPK1 and/or RRM 2 domain of SRSF1, allowing RRM 2 to bind the kinase and initiate phosphorylation. The cycles continue for several phosphorylation steps in a processive manner (steps 1-8) until the last few phosphorylation steps (approximately steps 9-12). During that time, a mechanical stress induces the unfolding of the beta-4 motif in RRM 2, which then docks at the docking groove of SRPK1. This also signals RRM 2 to begin to dissociate, which facilitates SRSF1 dissociation after phosphorylation is completed. Post-translationally, asymmetrically dimethylated at arginines, probably by PRMT1, methylation promotes localization to nuclear speckles.

It is found in the cytoplasm. It localises to the nucleus speckle. Plays a role in preventing exon skipping, ensuring the accuracy of splicing and regulating alternative splicing. Interacts with other spliceosomal components, via the RS domains, to form a bridge between the 5'- and 3'-splice site binding components, U1 snRNP and U2AF. Can stimulate binding of U1 snRNP to a 5'-splice site-containing pre-mRNA. Binds to purine-rich RNA sequences, either the octamer, 5'-RGAAGAAC-3' (r=A or G) or the decamers, AGGACAGAGC/AGGACGAAGC. Binds preferentially to the 5'-CGAGGCG-3' motif in vitro. Three copies of the octamer constitute a powerful splicing enhancer in vitro, the ASF/SF2 splicing enhancer (ASE) which can specifically activate ASE-dependent splicing. May function as export adapter involved in mRNA nuclear export through the TAP/NXF1 pathway. The sequence is that of Serine/arginine-rich splicing factor 1 (SRSF1) from Bos taurus (Bovine).